An 879-amino-acid polypeptide reads, in one-letter code: Alanine--tRNA ligase (879 aa).

The Zn(2+) site is built by His-566, His-570, Cys-668, and His-672.

Belongs to the class-II aminoacyl-tRNA synthetase family. Requires Zn(2+) as cofactor.

It localises to the cytoplasm. The enzyme catalyses tRNA(Ala) + L-alanine + ATP = L-alanyl-tRNA(Ala) + AMP + diphosphate. Its function is as follows. Catalyzes the attachment of alanine to tRNA(Ala) in a two-step reaction: alanine is first activated by ATP to form Ala-AMP and then transferred to the acceptor end of tRNA(Ala). Also edits incorrectly charged Ser-tRNA(Ala) and Gly-tRNA(Ala) via its editing domain. In Clostridium perfringens (strain 13 / Type A), this protein is Alanine--tRNA ligase.